Consider the following 225-residue polypeptide: Orotidine 5'-phosphate decarboxylase (225 aa).

Substrate-binding positions include Asp9, Lys31, 58–67 (DLKLHDIPNT), Thr115, Arg176, Gln184, Gly204, and Arg205. The active-site Proton donor is Lys60.

This sequence belongs to the OMP decarboxylase family. Type 1 subfamily. Homodimer.

The catalysed reaction is orotidine 5'-phosphate + H(+) = UMP + CO2. The protein operates within pyrimidine metabolism; UMP biosynthesis via de novo pathway; UMP from orotate: step 2/2. Its function is as follows. Catalyzes the decarboxylation of orotidine 5'-monophosphate (OMP) to uridine 5'-monophosphate (UMP). In Wolbachia sp. subsp. Brugia malayi (strain TRS), this protein is Orotidine 5'-phosphate decarboxylase.